A 542-amino-acid chain; its full sequence is Chaperonin GroEL (542 aa).

ATP is bound by residues 29–32 (TLGP), 86–90 (DGTTT), glycine 413, 476–478 (NAA), and aspartate 492. Positions 522 to 542 (PDENGPAAVPDMGMGGMGGMM) are disordered.

The protein belongs to the chaperonin (HSP60) family. In terms of assembly, forms a cylinder of 14 subunits composed of two heptameric rings stacked back-to-back. Interacts with the co-chaperonin GroES.

It localises to the cytoplasm. The enzyme catalyses ATP + H2O + a folded polypeptide = ADP + phosphate + an unfolded polypeptide.. In terms of biological role, together with its co-chaperonin GroES, plays an essential role in assisting protein folding. The GroEL-GroES system forms a nano-cage that allows encapsulation of the non-native substrate proteins and provides a physical environment optimized to promote and accelerate protein folding. The polypeptide is Chaperonin GroEL (Listeria monocytogenes serotype 4b (strain CLIP80459)).